Consider the following 395-residue polypeptide: Succinyl-diaminopimelate desuccinylase 2 (395 aa).

H79 contacts Zn(2+). Residue D81 is part of the active site. D112 serves as a coordination point for Zn(2+). E145 acts as the Proton acceptor in catalysis. The Zn(2+) site is built by E146, E174, and H363.

This sequence belongs to the peptidase M20A family. DapE subfamily. As to quaternary structure, homodimer. Zn(2+) serves as cofactor. Requires Co(2+) as cofactor.

It catalyses the reaction N-succinyl-(2S,6S)-2,6-diaminopimelate + H2O = (2S,6S)-2,6-diaminopimelate + succinate. It functions in the pathway amino-acid biosynthesis; L-lysine biosynthesis via DAP pathway; LL-2,6-diaminopimelate from (S)-tetrahydrodipicolinate (succinylase route): step 3/3. Functionally, catalyzes the hydrolysis of N-succinyl-L,L-diaminopimelic acid (SDAP), forming succinate and LL-2,6-diaminopimelate (DAP), an intermediate involved in the bacterial biosynthesis of lysine and meso-diaminopimelic acid, an essential component of bacterial cell walls. The chain is Succinyl-diaminopimelate desuccinylase 2 from Ruegeria sp. (strain TM1040) (Silicibacter sp.).